The sequence spans 406 residues: 8-amino-7-oxononanoate synthase (406 aa).

Residue Arg-21 coordinates substrate. A pyridoxal 5'-phosphate-binding site is contributed by 112-113 (GY). His-137 provides a ligand contact to substrate. Pyridoxal 5'-phosphate is bound by residues Ser-183, His-211, and Thr-239. Lys-242 is modified (N6-(pyridoxal phosphate)lysine). Thr-358 serves as a coordination point for substrate.

This sequence belongs to the class-II pyridoxal-phosphate-dependent aminotransferase family. BioF subfamily. In terms of assembly, homodimer. Requires pyridoxal 5'-phosphate as cofactor.

It carries out the reaction 6-carboxyhexanoyl-[ACP] + L-alanine + H(+) = (8S)-8-amino-7-oxononanoate + holo-[ACP] + CO2. It participates in cofactor biosynthesis; biotin biosynthesis. Its function is as follows. Catalyzes the decarboxylative condensation of pimeloyl-[acyl-carrier protein] and L-alanine to produce 8-amino-7-oxononanoate (AON), [acyl-carrier protein], and carbon dioxide. The chain is 8-amino-7-oxononanoate synthase from Burkholderia orbicola (strain MC0-3).